A 113-amino-acid polypeptide reads, in one-letter code: Putative increased recombination centers protein 14 (113 aa).

The polypeptide is Putative increased recombination centers protein 14 (IRC14) (Saccharomyces cerevisiae (strain ATCC 204508 / S288c) (Baker's yeast)).